The sequence spans 981 residues: Lateral signaling target protein 2 homolog (981 aa).

The segment at 308 to 462 is disordered; it reads PLGSSSIEAP…LESSDDDTDE (155 aa). 4 stretches are compositionally biased toward low complexity: residues 326 to 356, 369 to 380, 390 to 404, and 412 to 433; these read TTSS…TTNT, NNHNSNSNSSTN, SPSM…TPTA, and PSHS…PADW. The span at 434–462 shows a compositional bias: acidic residues; sequence SDGDDEDEDDDDIEVDEEDLESSDDDTDE. Phosphoserine is present on residues Ser544 and Ser545. 2 disordered regions span residues 561-642 and 749-897; these read EQMQ…SSLS and DNVF…SPPA. Positions 576–611 are enriched in basic residues; sequence HSHRHHQRHHHHHHHRHSHQHRQPHPHRTTRSGRKR. Positions 630 to 642 are enriched in low complexity; it reads LASGDTSAASSLS. Over residues 760 to 791 the composition is skewed to polar residues; the sequence is ATGQRHSAGASMQRNNTIDLASQSGEGSPSGA. Phosphoserine is present on Ser805. Low complexity-rich tracts occupy residues 811–866 and 883–896; these read AASS…PVSA and PSSA…LSPP. The FYVE-type zinc finger occupies 901 to 961; it reads DGKAPRCMAC…VCRDCYVREV (61 aa). The Zn(2+) site is built by Cys907, Cys910, Cys923, Cys926, Cys931, Cys934, Cys953, and Cys956.

It belongs to the lst-2 family.

Its function is as follows. Negative regulator of epidermal growth factor receptor (EGFR) signaling. The polypeptide is Lateral signaling target protein 2 homolog (Drosophila erecta (Fruit fly)).